We begin with the raw amino-acid sequence, 261 residues long: Guanine nucleotide exchange factor BopE (261 aa).

Belongs to the GEF (guanine exchange factor) SopE family. As to quaternary structure, monomer. Interacts with human CDC42.

The protein localises to the secreted. Its function is as follows. Activator for both CDC42 and RAC1 by directly interacting with these Rho GTPases and acting as a guanine nucleotide exchange factor (GEF). This activation results in actin cytoskeleton rearrangements and stimulates membrane ruffling, thus promoting bacterial entry into non-phagocytic cells. In Burkholderia pseudomallei (strain 1710b), this protein is Guanine nucleotide exchange factor BopE (bopE).